A 155-amino-acid polypeptide reads, in one-letter code: Pre-hexon-linking protein VIII (155 aa).

The propeptide occupies 44–84 (GVHRTKDIKPEDLVGRGIQLNSYQPPTTRLKPERVFQLAGG).

It belongs to the adenoviridae hexon-linking protein family. As to quaternary structure, interacts with the peripentonal hexons as well as the hexons in the facets. Part of a complex composed of the core-capsid bridging protein, the endosome lysis protein VI and the hexon-linking protein VIII; these interactions bridge the virus core to the capsid. Post-translationally, cleaved by the viral protease during virion maturation. May cause the middle segment to be shed from the capsid.

It is found in the virion. The protein localises to the host nucleus. Its function is as follows. Structural component of the virion that acts as a cement protein on the capsid interior and which glue the peripentonal hexons and group-of-nine hexons together. This is Pre-hexon-linking protein VIII from Bos taurus (Bovine).